A 101-amino-acid polypeptide reads, in one-letter code: RNA-binding protein Hfq (101 aa).

The Sm domain maps to 9–68 (DPFLNALRRERVPVSIYLVNGIKLQGQVESFDQFVILLKNTVSQMVYKHAISTVVPSRPV). Residues 63 to 101 (VPSRPVSHHSNTPSGSTNNYHGSNPSAPQQPQQDSDDAE) form a disordered region. Polar residues predominate over residues 70–86 (HHSNTPSGSTNNYHGSN).

Belongs to the Hfq family. As to quaternary structure, homohexamer.

RNA chaperone that binds small regulatory RNA (sRNAs) and mRNAs to facilitate mRNA translational regulation in response to envelope stress, environmental stress and changes in metabolite concentrations. Also binds with high specificity to tRNAs. This Yersinia pseudotuberculosis serotype O:1b (strain IP 31758) protein is RNA-binding protein Hfq.